The chain runs to 372 residues: Queuine tRNA-ribosyltransferase (372 aa).

The active-site Proton acceptor is the Asp89. Substrate is bound by residues 89–93, Asp161, and Gly232; that span reads DSGGF. The interval 262–268 is RNA binding; the sequence is GIGDLPS. Asp281 (nucleophile) is an active-site residue. The interval 286 to 290 is RNA binding; important for wobble base 34 recognition; the sequence is TKAAR. The Zn(2+) site is built by Cys319, Cys321, Cys324, and His351.

Belongs to the queuine tRNA-ribosyltransferase family. Homodimer. Within each dimer, one monomer is responsible for RNA recognition and catalysis, while the other monomer binds to the replacement base PreQ1. It depends on Zn(2+) as a cofactor.

The catalysed reaction is 7-aminomethyl-7-carbaguanine + guanosine(34) in tRNA = 7-aminomethyl-7-carbaguanosine(34) in tRNA + guanine. The protein operates within tRNA modification; tRNA-queuosine biosynthesis. In terms of biological role, catalyzes the base-exchange of a guanine (G) residue with the queuine precursor 7-aminomethyl-7-deazaguanine (PreQ1) at position 34 (anticodon wobble position) in tRNAs with GU(N) anticodons (tRNA-Asp, -Asn, -His and -Tyr). Catalysis occurs through a double-displacement mechanism. The nucleophile active site attacks the C1' of nucleotide 34 to detach the guanine base from the RNA, forming a covalent enzyme-RNA intermediate. The proton acceptor active site deprotonates the incoming PreQ1, allowing a nucleophilic attack on the C1' of the ribose to form the product. After dissociation, two additional enzymatic reactions on the tRNA convert PreQ1 to queuine (Q), resulting in the hypermodified nucleoside queuosine (7-(((4,5-cis-dihydroxy-2-cyclopenten-1-yl)amino)methyl)-7-deazaguanosine). The chain is Queuine tRNA-ribosyltransferase from Chlamydia trachomatis serovar A (strain ATCC VR-571B / DSM 19440 / HAR-13).